The primary structure comprises 123 residues: Defensin beta 118 (123 aa).

A signal peptide spans methionine 1–proline 19. 3 cysteine pairs are disulfide-bonded: cysteine 27/cysteine 54, cysteine 34/cysteine 48, and cysteine 38/cysteine 55. The propeptide occupies leucine 65–serine 123. The tract at residues lysine 100–serine 123 is disordered. The segment covering glycine 109–serine 123 has biased composition (polar residues).

The protein belongs to the beta-defensin family. In terms of processing, the three-dimensional structure formed by the three intramolecular disulfide bridges is indispensable for antimicrobial activity. High-level and epididymis-specific expression. Most abundant in the epithelium of the caput and is also present in the lumen and bound to sperm.

The protein resides in the secreted. Its function is as follows. Host defense peptide that exhibits antimicrobial activity against both Gram-negative bacteria, such as E.coli and S.typhimurium, and Gram-positive bacteria, such as S.aureus and B.subtilis. Inhibits cell adhesion of E.coli on intestinal epithelial enterocytes. Causes rapid permeabilization of both the outer and inner membrane of E.coli, leading to morphological alterations on the bacterial surface. Binds to bacterial lipopolysaccharides (LPS) with high affinity, and may thereby be involved in immunoregulation through LPS neutralization. May contribute to epididymal innate immunity and protect the sperm against attack by microorganisms. This is Defensin beta 118 (DEFB118) from Macaca mulatta (Rhesus macaque).